Consider the following 632-residue polypeptide: Golgin subfamily A member 8H (632 aa).

The segment at 1 to 77 (MAEETQHNKL…SSATLKDLES (77 aa)) is disordered. 2 coiled-coil regions span residues 110–201 (VEHQ…LSSR) and 240–468 (ECAE…EKAD). Basic and acidic residues-rich tracts occupy residues 352-362 (KQEERIQEQHK) and 427-440 (HGGE…EEAP). 3 disordered regions span residues 352 to 379 (KQEE…EPNN), 423 to 452 (PGEG…DPES), and 496 to 524 (LSEP…DEGE). Gly residues predominate over residues 508–520 (LGGGHHQAGAQGG).

This sequence belongs to the GOLGA8 family.

The polypeptide is Golgin subfamily A member 8H (GOLGA8H) (Homo sapiens (Human)).